Here is a 257-residue protein sequence, read N- to C-terminus: Metallo-beta-lactamase type 2 (257 aa).

The signal sequence occupies residues 1 to 30; it reads MKKNTLLKVGLCVSLLGTTQFVSTISSVQA. Residues H116, H118, D120, H179, and C198 each coordinate Zn(2+). Residues K201 and N210 each contribute to the substrate site. H240 serves as a coordination point for Zn(2+).

The protein belongs to the metallo-beta-lactamase superfamily. Class-B beta-lactamase family. In terms of assembly, monomer. Zn(2+) is required as a cofactor.

It is found in the periplasm. The catalysed reaction is a beta-lactam + H2O = a substituted beta-amino acid. Confers resistance to the different beta-lactams antibiotics (penicillin, cephalosporin and carbapenem) via the hydrolysis of the beta-lactam ring. The chain is Metallo-beta-lactamase type 2 from Bacillus sp. (strain 170).